The sequence spans 282 residues: Pantothenate synthetase (282 aa).

30-37 serves as a coordination point for ATP; sequence MGALHAGH. Residue H37 is the Proton donor of the active site. Residue Q61 participates in (R)-pantoate binding. Residue Q61 coordinates beta-alanine. 147–150 provides a ligand contact to ATP; it reads GEKD. Position 153 (Q153) interacts with (R)-pantoate. ATP-binding positions include V176 and 184 to 187; that span reads LSSR.

This sequence belongs to the pantothenate synthetase family. As to quaternary structure, homodimer.

The protein resides in the cytoplasm. The catalysed reaction is (R)-pantoate + beta-alanine + ATP = (R)-pantothenate + AMP + diphosphate + H(+). It participates in cofactor biosynthesis; (R)-pantothenate biosynthesis; (R)-pantothenate from (R)-pantoate and beta-alanine: step 1/1. Catalyzes the condensation of pantoate with beta-alanine in an ATP-dependent reaction via a pantoyl-adenylate intermediate. The sequence is that of Pantothenate synthetase from Bacteroides fragilis (strain YCH46).